The sequence spans 321 residues: Nacrein-like protein (321 aa).

Positions 1 to 319 constitute an Alpha-carbonic anhydrase domain; it reads RGPKNWCKVH…NKNVIVYRNH (319 aa). Catalysis depends on His58, which acts as the Proton acceptor.

It belongs to the alpha-carbonic anhydrase family. Component of the organic matrix of calcified shell layers like nacre and prisms.

It localises to the secreted. This chain is Nacrein-like protein, found in Mytilus californianus (California mussel).